The chain runs to 114 residues: Large ribosomal subunit protein bL20c (114 aa).

Belongs to the bacterial ribosomal protein bL20 family.

It localises to the plastid. In terms of biological role, binds directly to 23S ribosomal RNA and is necessary for the in vitro assembly process of the 50S ribosomal subunit. It is not involved in the protein synthesizing functions of that subunit. The chain is Large ribosomal subunit protein bL20c from Prototheca wickerhamii.